The following is a 405-amino-acid chain: Serpin H1 (405 aa).

The signal sequence occupies residues 1–15; it reads MQIFLVLALCGLAAA. Residues Asn107 and Asn112 are each glycosylated (N-linked (GlcNAc...) asparagine). Positions 402–405 match the Prevents secretion from ER motif; that stretch reads RDEL.

It belongs to the serpin family.

The protein localises to the endoplasmic reticulum lumen. Functionally, binds specifically to collagen. Could be involved as a chaperone in the biosynthetic pathway of collagen. This is Serpin H1 (SERPINH1) from Gallus gallus (Chicken).